Reading from the N-terminus, the 321-residue chain is uncharacterized protein (321 aa).

The Cytoplasmic segment spans residues 1 to 5; the sequence is MKQQA. A helical membrane pass occupies residues 6–26; the sequence is GIGILLALTTAICWGALPIAM. Positions 17 to 144 constitute an EamA 1 domain; it reads ICWGALPIAM…LLSGLVMFFN (128 aa). At 27–35 the chain is on the periplasmic side; sequence KQVLEVMEP. A helical transmembrane segment spans residues 36–56; sequence PTIVFYRFLMASIGLGAILAV. Over 57–70 the chain is Cytoplasmic; sequence KKRLPPLRVFRKPR. Residues 71–91 traverse the membrane as a helical segment; it reads WLILLAVATAGLFGNFILFSS. Topologically, residues 92-99 are periplasmic; it reads SLQYLSPT. A helical membrane pass occupies residues 100 to 120; it reads ASQVIGQLSPVGMMVASVFIL. Topologically, residues 121–130 are cytoplasmic; the sequence is KEKMRSTQVV. The chain crosses the membrane as a helical span at residues 131–151; that stretch reads GALMLLSGLVMFFNTSLVEIF. The Periplasmic portion of the chain corresponds to 152–156; the sequence is TKLTD. Residues 157–177 form a helical membrane-spanning segment; sequence YTWGVIFGVGAATVWVSYGVA. The EamA 2 domain occupies 169 to 292; sequence TVWVSYGVAQ…GYLGAFVVVA (124 aa). Residues 178 to 190 are Cytoplasmic-facing; sequence QKVLLRRLASPQI. The helical transmembrane segment at 191-211 threads the bilayer; sequence LFLLYTLCTIALFPLAKPGVI. At 212–216 the chain is on the periplasmic side; that stretch reads AQLSH. The chain crosses the membrane as a helical span at residues 217–237; sequence WQLACLIFCGLNTLVGYGALA. Residues 238 to 249 are Cytoplasmic-facing; that stretch reads EAMARWQAAQVS. Residues 250–270 traverse the membrane as a helical segment; that stretch reads AIITLTPLFTLFFSDLLSLAW. The Periplasmic portion of the chain corresponds to 271-278; the sequence is PDFFARPM. The chain crosses the membrane as a helical span at residues 279-299; the sequence is LNLLGYLGAFVVVAGAMYSAI. At 300–321 the chain is on the cytoplasmic side; it reads GHRIWGGLRKHTTVVSQPRAGE.

This sequence belongs to the EamA transporter family.

Its subcellular location is the cell inner membrane. This is an uncharacterized protein from Escherichia coli O157:H7.